Consider the following 446-residue polypeptide: Tubulin beta-2 chain (446 aa).

GTP-binding residues include glutamine 11, glutamate 69, serine 138, glycine 142, threonine 143, glycine 144, asparagine 204, and asparagine 226. Glutamate 69 is a binding site for Mg(2+). The interval 426-446 (QEAGIDEEEEYEEEAPAEHEE) is disordered. Positions 429–440 (GIDEEEEYEEEA) are enriched in acidic residues.

Belongs to the tubulin family. As to quaternary structure, dimer of alpha and beta chains. A typical microtubule is a hollow water-filled tube with an outer diameter of 25 nm and an inner diameter of 15 nM. Alpha-beta heterodimers associate head-to-tail to form protofilaments running lengthwise along the microtubule wall with the beta-tubulin subunit facing the microtubule plus end conferring a structural polarity. Microtubules usually have 13 protofilaments but different protofilament numbers can be found in some organisms and specialized cells. Mg(2+) serves as cofactor.

It localises to the cytoplasm. The protein resides in the cytoskeleton. In terms of biological role, tubulin is the major constituent of microtubules, a cylinder consisting of laterally associated linear protofilaments composed of alpha- and beta-tubulin heterodimers. Microtubules grow by the addition of GTP-tubulin dimers to the microtubule end, where a stabilizing cap forms. Below the cap, tubulin dimers are in GDP-bound state, owing to GTPase activity of alpha-tubulin. The sequence is that of Tubulin beta-2 chain from Hypocrea virens (Gliocladium virens).